Reading from the N-terminus, the 1836-residue chain is MPENPAAEKMQVLQVLDRLRGKLQEKGDTTQNEKLSAFYETLKSPLFNQILTLQQSIKQLKGQLSHIPSDCSANFDFSRKGLLVFTDGSITNGNAHRPCSSITASESLPWTQRSGNEDFTSVIQQMAQGRHIEYIDIERPSTGGLGFSVVALRSQSLGLIDIFVKEVHPGSVADRDQRLKENDQILAINDTPLDQNISHQQAIALLQQATGSLRLVVAREVGHTQSRTSTSSADTTLPETVRWGHTEDVELINDGSGLGFGIVGGKSSGVVVRTIVPGGLADRDGRLQTGDHILKIGSTNVQGMTSEQVAQVLRNCGNSVRMLVARDPVGEIAVTPPTPASLPVALPVVATRTLGSDSSPFETYNVELVKKDGQSLGIRIVGYVGTAHPGEASGIYVKSIIPGSAAYHNGQIQVNDKIVAVDGVNIQGFANQDVVEVLRNAGQVVHLTLVRRKTSLSASPFEQPSSREAVAEPPEVPELTGSLKPETNSRMEAEEIGERLDNLRKDTVQALEKPDVYPEDIPGCPENELKSRWENLLGPDYEVMVATLDTQIADDEELQKYSKLLPIHTLRLGMEVDSFDGHHYISSIAPGGPVDTLNLLQPEDELLEVNGVQLYGKSRREAVSFLKEVPPPFTLVCCRRLFDDEASVDEPRTVEPSLLEAEVDRSVDVSTEDDDGELALWSPEVKTVELVKDCKGLGFSILDYQDPLDPMRSVIVIRSLVADGVAERSGELLPGDRLVSVNEFSLDNATLAEAVEVLKAVPPGVVHLGICKPLVEEEKEEKEEHFIFHSNNNGDNSESPETVHEIHSSLILEAPQGFRDEPYLEELVDEPFLDLGKSLQFQQKDMDSSSEAWEMHEFLSPRLERRGEEREMLVDEEYEIYQDRLRDMEAHPPPPHIREPTSASPRLDLQAGPQWLHADLSGGEILECHDTESMMTAYPQEMQDYSFSTTDMMKETFGLDSRPPMPSSEGNGQHGRFDDLEHLHSLVSHGLDLGMMTPSDLQGPGVLVDLPAVTQRREQEELPLYRLPSARVVTKPSSHVGMVSSRHANAACELPEREEGEGEETPNFSHWGPPRIVEIFREPNVSLGISIVGGQTVIKRLKNGEELKGIFIKQVLEDSPAGKTKALKTGDKILEVSGVDLQNASHAEAVEAIKSAGNPVVFVVQSLSSTPRVIPSVNNKGKTPPQNQDQNTQEKKAKRHGTAPPPMKLPPPYRAPSADTEESEEDSALTDKKIRQRYADLPGELHIIELEKDKNGLGLSLAGNKDRSRMSIFVVGINPDGPAAADGRMRVGDELLEINNQILYGRSHQNASAIIKTAPTRVKLVFIRNEDAVNQMAVAPFPVPSHSPSPVEDLGGTEPVSSEEDSSVDAKPLPERESSKPEDLTQAVDDSMVAEQEKASESPDSAARQMKQPGYSAQVSSSSQEIPSAPAPLCQSTHADVTGSGNFQAPLSVDPAPLSVDPATCPIVPGQEMIIEISKGRSGLGLSIVGGKDTPLDAIVIHEVYEEGAAARDGRLWAGDQILEVNGVDLRSSSHEEAITALRQTPQKVRLVIYRDEAQYRDEENLEVFLVDLQKKTGRGLGLSIVGKRSGSGVFISDIVKGGAADLDGRLIRGDQILSVNGEDVRQASQETVATILKCVQGLVQLEIGRLRAGSWASSRKTSQNSQGDQHSAHSSCRPSFAPVITSLQNLVGTKRSSDPPQKCTEEEPRTVEIIRELSDALGVSIAGGKGSPLGDIPIFIAMIQANGVAARTQKLKVGDRIVSINGQPLDGLSHTDAVNLLKNAFGRIILQVVADTNISAIATQLEMMSAGSQLGSPTADRHPQDPEELLQRTAD.

In terms of domain architecture, L27 spans 1-65 (MPENPAAEKM…SIKQLKGQLS (65 aa)). 3 consecutive PDZ domains span residues 134–221 (YIDI…AREV), 248–328 (DVEL…ARDP), and 365–453 (NVEL…VRRK). Residues serine 455, serine 459, and serine 482 each carry the phosphoserine modification. Residues 456–466 (LSASPFEQPSS) show a composition bias toward polar residues. Residues 456–492 (LSASPFEQPSSREAVAEPPEVPELTGSLKPETNSRME) form a disordered region. In terms of domain architecture, PDZ 4 spans 555–641 (DEELQKYSKL…PFTLVCCRRL (87 aa)). A Phosphoserine modification is found at serine 647. 2 PDZ domains span residues 687–773 (TVEL…ICKP) and 1074–1166 (PRIV…VVQS). The segment covering 1173–1191 (VIPSVNNKGKTPPQNQDQN) has biased composition (polar residues). Residues 1173–1232 (VIPSVNNKGKTPPQNQDQNTQEKKAKRHGTAPPPMKLPPPYRAPSADTEESEEDSALTDK) are disordered. The span at 1203-1214 (APPPMKLPPPYR) shows a compositional bias: pro residues. Serine 1217 is subject to Phosphoserine. Acidic residues predominate over residues 1219 to 1228 (DTEESEEDSA). The region spanning 1245–1328 (LHIIELEKDK…PTRVKLVFIR (84 aa)) is the PDZ 7 domain. A disordered region spans residues 1341-1448 (FPVPSHSPSP…ADVTGSGNFQ (108 aa)). Basic and acidic residues predominate over residues 1372-1383 (PLPERESSKPED). 2 stretches are compositionally biased toward polar residues: residues 1415–1426 (YSAQVSSSSQEI) and 1434–1448 (CQST…GNFQ). 2 consecutive PDZ domains span residues 1472–1555 (EMII…VIYR) and 1568–1650 (VFLV…EIGR). Threonine 1545 is modified (phosphothreonine). The tract at residues 1657-1678 (ASSRKTSQNSQGDQHSAHSSCR) is disordered. The PDZ 10 domain occupies 1709–1795 (PRTVEIIREL…FGRIILQVVA (87 aa)). The tract at residues 1813 to 1836 (SQLGSPTADRHPQDPEELLQRTAD) is disordered.

In terms of assembly, forms a ternary complex with PALS1 and CRB1. Component of a complex whose core is composed of ARHGAP17, AMOT, PALS1, INADL/PATJ and PARD3/PAR3. Forms a heterotrimeric complex composed of MMP5, LIN7B and PATJ; the N-terminal L27 domain of PALS1 interacts with the L27 domain of PATJ and the C-terminal L27 domain of PALS1 interacts with the L27 domain of LIN7B. Component of a complex composed of CRB3, PALS1 and PATJ. As part of the Crumbs complex; interacts with WWP1, the interaction is enhanced by AMOTL2 and facilitates WWP1 localization to the plasma membrane. The Crumbs complex promotes monoubiquitination of AMOTL2 by WWP1, which activates the Hippo signaling pathway. Interacts (via N-terminus) with PALS1/PALS (via PDZ domain). Interacts with TJP3/ZO-3 and CLDN1/claudin-1. Interacts with ASIC3, KCNJ10, KCNJ15, GRIN2A, GRIN2B, GRIN2C, GRIN2D, NLGN2, and HTR2A. Interacts with MPP7. Directly interacts with HTR4. Interacts (via PDZ domain 8) with WWC1 (via the ADDV motif). Interacts with SLC6A4. Interacts (via C-terminus) with ARHGEF18. Interacts with NPHP1. Interacts with PARD3/PAR3. Interacts (via PDZ1-6 domains) with TJP1/ZO1; the interaction is required for attachment and extension of TJP1/ZO1 condensates along the apical cell interface. In terms of tissue distribution, abundantly expressed in germ cells, also expressed in testes and seminiferous tubules, with faint expression in Sertoli cells (at protein level).

The protein localises to the cell junction. It is found in the tight junction. Its subcellular location is the apical cell membrane. It localises to the cytoplasm. The protein resides in the perinuclear region. In terms of biological role, scaffolding protein that facilitates the localization of proteins to the cell membrane. Required for the correct formation of tight junctions and epithelial apico-basal polarity. Acts (via its L27 domain) as an apical connector and elongation factor for multistranded TJP1/ZO1 condensates that form a tight junction belt, thereby required for the formation of the tight junction-mediated cell barrier. Positively regulates epithelial cell microtubule elongation and cell migration, possibly via facilitating localization of PRKCI/aPKC and PAR3D/PAR3 at the leading edge of migrating cells. Plays a role in the correct reorientation of the microtubule-organizing center during epithelial migration. May regulate the surface expression and/or function of ASIC3 in sensory neurons. May recruit ARHGEF18 to apical cell-cell boundaries. The protein is InaD-like protein of Rattus norvegicus (Rat).